Consider the following 476-residue polypeptide: MDFEAVIGLEVHAELSTNTKIYCGCTTEFGGQPNTHVCPICLGLPGSLPQLNKRVVEYGIKAGLALNCSINKVCRMDRKNYFYPDCPKNYQITQDEVPICRDGYIEIELENGEKKKIGIERIHMEEDAGKLLHTNAGTLVDYNRAGVPLIEIVSRPDIRTPEEATKYLEKLKSILSSIEVSDCKMEQGSLRCDGNISVMPKGSEKFGVRSEIKNMNSFKALEKALSYEYDRHVEAVTKGEILEQETRRWDEANSVTVLMRSKEKANDYRYFPEGDLVTLNISDEWIEEVRKTIPELPHEKAERFVNEFGIPKYDAMVLTLTMDMAKFFEETALKSEDAKVASNWLMGDISRLMNEKTIEVKDLKFNPEQLAELIKLINAGTISNNIGKKVLDDMFKSGKNPKDIVEEKGLVQNNDEGAILEVVKNIIENNPQSIEDFKNGKKRALGFLVGLVMKETKGKANPQIVNKLVSEEANKM.

This sequence belongs to the GatB/GatE family. GatB subfamily. Heterotrimer of A, B and C subunits.

It catalyses the reaction L-glutamyl-tRNA(Gln) + L-glutamine + ATP + H2O = L-glutaminyl-tRNA(Gln) + L-glutamate + ADP + phosphate + H(+). The catalysed reaction is L-aspartyl-tRNA(Asn) + L-glutamine + ATP + H2O = L-asparaginyl-tRNA(Asn) + L-glutamate + ADP + phosphate + 2 H(+). Its function is as follows. Allows the formation of correctly charged Asn-tRNA(Asn) or Gln-tRNA(Gln) through the transamidation of misacylated Asp-tRNA(Asn) or Glu-tRNA(Gln) in organisms which lack either or both of asparaginyl-tRNA or glutaminyl-tRNA synthetases. The reaction takes place in the presence of glutamine and ATP through an activated phospho-Asp-tRNA(Asn) or phospho-Glu-tRNA(Gln). The polypeptide is Aspartyl/glutamyl-tRNA(Asn/Gln) amidotransferase subunit B (Clostridium botulinum (strain Okra / Type B1)).